The chain runs to 2197 residues: uncharacterized protein (2197 aa).

Residue S2 is modified to N-acetylserine. Residues 2159 to 2195 form an HEAT repeat; the sequence is TIPFLAELLEDVELSVKSLAQDIIKQMEEMSGESLAE.

The protein belongs to the HEATR1/UTP10 family.

The protein localises to the nucleus. It is found in the nucleolus. Its function is as follows. Involved in nucleolar processing of pre-18S ribosomal RNA. Involved in ribosome biosynthesis. This is an uncharacterized protein from Arabidopsis thaliana (Mouse-ear cress).